We begin with the raw amino-acid sequence, 417 residues long: Serine--tRNA ligase (417 aa).

Position 232 to 234 (232 to 234 (TAE)) interacts with L-serine. ATP contacts are provided by residues 263–265 (RRE) and valine 279. L-serine is bound at residue glutamate 286. 350–353 (EISS) provides a ligand contact to ATP. L-serine is bound at residue serine 385.

It belongs to the class-II aminoacyl-tRNA synthetase family. Type-1 seryl-tRNA synthetase subfamily. In terms of assembly, homodimer. The tRNA molecule binds across the dimer.

It localises to the cytoplasm. It carries out the reaction tRNA(Ser) + L-serine + ATP = L-seryl-tRNA(Ser) + AMP + diphosphate + H(+). The enzyme catalyses tRNA(Sec) + L-serine + ATP = L-seryl-tRNA(Sec) + AMP + diphosphate + H(+). The protein operates within aminoacyl-tRNA biosynthesis; selenocysteinyl-tRNA(Sec) biosynthesis; L-seryl-tRNA(Sec) from L-serine and tRNA(Sec): step 1/1. In terms of biological role, catalyzes the attachment of serine to tRNA(Ser). Is also able to aminoacylate tRNA(Sec) with serine, to form the misacylated tRNA L-seryl-tRNA(Sec), which will be further converted into selenocysteinyl-tRNA(Sec). The polypeptide is Serine--tRNA ligase (Leptospira borgpetersenii serovar Hardjo-bovis (strain JB197)).